Here is a 104-residue protein sequence, read N- to C-terminus: Co-chaperonin GroES 5 (104 aa).

It belongs to the GroES chaperonin family. As to quaternary structure, heptamer of 7 subunits arranged in a ring. Interacts with the chaperonin GroEL.

The protein localises to the cytoplasm. In terms of biological role, together with the chaperonin GroEL, plays an essential role in assisting protein folding. The GroEL-GroES system forms a nano-cage that allows encapsulation of the non-native substrate proteins and provides a physical environment optimized to promote and accelerate protein folding. GroES binds to the apical surface of the GroEL ring, thereby capping the opening of the GroEL channel. The sequence is that of Co-chaperonin GroES 5 from Rhizobium meliloti (strain 1021) (Ensifer meliloti).